We begin with the raw amino-acid sequence, 498 residues long: UDP-N-acetylmuramoyl-L-alanyl-D-glutamate--2,6-diaminopimelate ligase (498 aa).

Ser29 is a UDP-N-acetyl-alpha-D-muramoyl-L-alanyl-D-glutamate binding site. 120–126 is a binding site for ATP; sequence GTDGKTS. Residues 162-163, Ser189, Gln195, and Arg197 each bind UDP-N-acetyl-alpha-D-muramoyl-L-alanyl-D-glutamate; that span reads TT. Lys229 carries the N6-carboxylysine modification. Residues Arg392, 416-419, Gly466, and Glu470 contribute to the meso-2,6-diaminopimelate site; that span reads DNPR. A Meso-diaminopimelate recognition motif motif is present at residues 416 to 419; that stretch reads DNPR.

It belongs to the MurCDEF family. MurE subfamily. Mg(2+) serves as cofactor. Post-translationally, carboxylation is probably crucial for Mg(2+) binding and, consequently, for the gamma-phosphate positioning of ATP.

Its subcellular location is the cytoplasm. It catalyses the reaction UDP-N-acetyl-alpha-D-muramoyl-L-alanyl-D-glutamate + meso-2,6-diaminopimelate + ATP = UDP-N-acetyl-alpha-D-muramoyl-L-alanyl-gamma-D-glutamyl-meso-2,6-diaminopimelate + ADP + phosphate + H(+). It functions in the pathway cell wall biogenesis; peptidoglycan biosynthesis. Catalyzes the addition of meso-diaminopimelic acid to the nucleotide precursor UDP-N-acetylmuramoyl-L-alanyl-D-glutamate (UMAG) in the biosynthesis of bacterial cell-wall peptidoglycan. This chain is UDP-N-acetylmuramoyl-L-alanyl-D-glutamate--2,6-diaminopimelate ligase, found in Alkalilimnicola ehrlichii (strain ATCC BAA-1101 / DSM 17681 / MLHE-1).